The primary structure comprises 335 residues: MIRDKISVSIQTLRWKCIESRAYSKRLHYGRFALSPLRKGRADTIGIAMRRALLGEVEGTCITRVKLENIKHEYSAIIGIEESVHDILMNLKEIVLRSDSYGIREASIYIVGPRNVTAQDIILPPSVKIIDTTQHIARLTKSITSDIRLQIEKNRGYIIHSSNNYQDGIFPIDAVFMPVRDANYSIHSYGSGNEIQEVLFLEIWTNGGLTPREALYEASRNLIDLFIPFLHGEEQNIDGMNNKKGSNMLPFPLSHVLTDTGETKEKIAFKHIFIDQLELPPKTYNSLRRANIHTLLDLLNYSREDLMKIEHLEKESVEQVLEVLRKRFAIDPPRN.

The interval 1-233 (MIRDKISVSI…DLFIPFLHGE (233 aa)) is alpha N-terminal domain (alpha-NTD). The segment at 264 to 335 (KEKIAFKHIF…KRFAIDPPRN (72 aa)) is alpha C-terminal domain (alpha-CTD).

This sequence belongs to the RNA polymerase alpha chain family. In terms of assembly, in plastids the minimal PEP RNA polymerase catalytic core is composed of four subunits: alpha, beta, beta', and beta''. When a (nuclear-encoded) sigma factor is associated with the core the holoenzyme is formed, which can initiate transcription.

The protein resides in the plastid. It localises to the chloroplast. The enzyme catalyses RNA(n) + a ribonucleoside 5'-triphosphate = RNA(n+1) + diphosphate. DNA-dependent RNA polymerase catalyzes the transcription of DNA into RNA using the four ribonucleoside triphosphates as substrates. The protein is DNA-directed RNA polymerase subunit alpha of Pinus koraiensis (Korean pine).